The chain runs to 378 residues: Ribosomal RNA large subunit methyltransferase G (378 aa).

Belongs to the methyltransferase superfamily. RlmG family.

The protein localises to the cytoplasm. It carries out the reaction guanosine(1835) in 23S rRNA + S-adenosyl-L-methionine = N(2)-methylguanosine(1835) in 23S rRNA + S-adenosyl-L-homocysteine + H(+). In terms of biological role, specifically methylates the guanine in position 1835 (m2G1835) of 23S rRNA. This Shigella boydii serotype 18 (strain CDC 3083-94 / BS512) protein is Ribosomal RNA large subunit methyltransferase G.